The primary structure comprises 204 residues: Mediator of RNA polymerase II transcription subunit 31 (204 aa).

Residues 134–204 (QQQQQQANGM…SGANIKLELN (71 aa)) are disordered. Residues 161–194 (SASTADSQQTSSALQPVQAQPGNPQQQQQINGVA) are compositionally biased toward low complexity.

Belongs to the Mediator complex subunit 31 family. As to quaternary structure, component of the Mediator complex, which includes at least MED4, MED6, MED14, MED17, MED18, MED20, MED21, MED23, MED24, MED27, MED30 and MED31.

The protein resides in the nucleus. Its function is as follows. Component of the Mediator complex, a coactivator involved in the regulated transcription of nearly all RNA polymerase II-dependent genes. Mediator functions as a bridge to convey information from gene-specific regulatory proteins to the basal RNA polymerase II transcription machinery. Mediator is recruited to promoters by direct interactions with regulatory proteins and serves as a scaffold for the assembly of a functional preinitiation complex with RNA polymerase II and the general transcription factors. Required for activated transcription of the MtnA gene. This chain is Mediator of RNA polymerase II transcription subunit 31 (MED31), found in Drosophila melanogaster (Fruit fly).